The chain runs to 249 residues: Secretion system apparatus lipoprotein SsaJ (249 aa).

Positions 1–18 (MKVHRIVFLTVLTFFLTA) are cleaved as a signal peptide. Cys-19 is lipidated: N-palmitoyl cysteine. Cys-19 is lipidated: S-diacylglycerol cysteine. The chain crosses the membrane as a helical span at residues 225 to 245 (LMLSLTGLLLGVGILIGYFCL).

The protein belongs to the YscJ lipoprotein family.

It localises to the cell outer membrane. Its function is as follows. Component of Salmonella pathogenicity island 2 (SPI-2) type III secretion system, required for secretion of some type III-secreted effectors including the SpvB exotoxin. This Salmonella typhimurium (strain 14028s / SGSC 2262) protein is Secretion system apparatus lipoprotein SsaJ (ssaJ).